Reading from the N-terminus, the 391-residue chain is Elongation factor Tu 1 (391 aa).

One can recognise a tr-type G domain in the interval 10-201 (KLHVNIGTIG…EVDRYIPTPE (192 aa)). Positions 19–26 (GHVDHGKT) are G1. 19–26 (GHVDHGKT) is a binding site for GTP. T26 is a binding site for Mg(2+). A G2 region spans residues 55–59 (GITIS). Residues 76–79 (DCPG) are G3. GTP-binding positions include 76–80 (DCPGH) and 131–134 (NKVD). The segment at 131–134 (NKVD) is G4. A G5 region spans residues 169–171 (SAL).

Belongs to the TRAFAC class translation factor GTPase superfamily. Classic translation factor GTPase family. EF-Tu/EF-1A subfamily. In terms of assembly, monomer.

Its subcellular location is the cytoplasm. It catalyses the reaction GTP + H2O = GDP + phosphate + H(+). In terms of biological role, GTP hydrolase that promotes the GTP-dependent binding of aminoacyl-tRNA to the A-site of ribosomes during protein biosynthesis. The chain is Elongation factor Tu 1 from Bartonella bacilliformis (strain ATCC 35685 / KC583 / Herrer 020/F12,63).